Here is a 340-residue protein sequence, read N- to C-terminus: Phosphoribosylformylglycinamidine cyclo-ligase (340 aa).

Belongs to the AIR synthase family.

It localises to the cytoplasm. The enzyme catalyses 2-formamido-N(1)-(5-O-phospho-beta-D-ribosyl)acetamidine + ATP = 5-amino-1-(5-phospho-beta-D-ribosyl)imidazole + ADP + phosphate + H(+). It functions in the pathway purine metabolism; IMP biosynthesis via de novo pathway; 5-amino-1-(5-phospho-D-ribosyl)imidazole from N(2)-formyl-N(1)-(5-phospho-D-ribosyl)glycinamide: step 2/2. The chain is Phosphoribosylformylglycinamidine cyclo-ligase from Lactococcus lactis subsp. cremoris (strain MG1363).